The following is a 600-amino-acid chain: Elongation factor 4 (600 aa).

A tr-type G domain is found at 5–187 (KYIRNFSIVA…EIVEKVPAPE (183 aa)). GTP is bound by residues 17 to 22 (DHGKST) and 134 to 137 (NKVD).

This sequence belongs to the TRAFAC class translation factor GTPase superfamily. Classic translation factor GTPase family. LepA subfamily.

The protein localises to the cell membrane. The catalysed reaction is GTP + H2O = GDP + phosphate + H(+). Required for accurate and efficient protein synthesis under certain stress conditions. May act as a fidelity factor of the translation reaction, by catalyzing a one-codon backward translocation of tRNAs on improperly translocated ribosomes. Back-translocation proceeds from a post-translocation (POST) complex to a pre-translocation (PRE) complex, thus giving elongation factor G a second chance to translocate the tRNAs correctly. Binds to ribosomes in a GTP-dependent manner. In Clostridium perfringens (strain ATCC 13124 / DSM 756 / JCM 1290 / NCIMB 6125 / NCTC 8237 / Type A), this protein is Elongation factor 4.